The sequence spans 1034 residues: Isoleucine--tRNA ligase (1034 aa).

The short motif at 46–56 is the 'HIGH' region element; sequence PYCSGAIHLGT. Residues 598–602 carry the 'KMSKS' region motif; it reads KMSKS. Lys601 serves as a coordination point for ATP.

It belongs to the class-I aminoacyl-tRNA synthetase family. IleS type 2 subfamily. In terms of assembly, monomer. Requires Zn(2+) as cofactor.

The protein resides in the cytoplasm. It catalyses the reaction tRNA(Ile) + L-isoleucine + ATP = L-isoleucyl-tRNA(Ile) + AMP + diphosphate. Its function is as follows. Catalyzes the attachment of isoleucine to tRNA(Ile). As IleRS can inadvertently accommodate and process structurally similar amino acids such as valine, to avoid such errors it has two additional distinct tRNA(Ile)-dependent editing activities. One activity is designated as 'pretransfer' editing and involves the hydrolysis of activated Val-AMP. The other activity is designated 'posttransfer' editing and involves deacylation of mischarged Val-tRNA(Ile). The sequence is that of Isoleucine--tRNA ligase from Methanococcus maripaludis (strain DSM 14266 / JCM 13030 / NBRC 101832 / S2 / LL).